The sequence spans 87 residues: Gibberellin-regulated protein 8 (87 aa).

An N-terminal signal peptide occupies residues 1–25 (MKLVVVQFFIISLLLTSSFSVLSSA).

The protein belongs to the GASA family. Post-translationally, six disulfide bonds may be present. As to expression, expressed in roots and developing seeds.

The protein resides in the secreted. In terms of biological role, gibberellin-regulated protein that may function in hormonal controlled steps of development such as seed germination, flowering and seed maturation. The sequence is that of Gibberellin-regulated protein 8 from Arabidopsis thaliana (Mouse-ear cress).